The following is a 128-amino-acid chain: Large ribosomal subunit protein uL22 (128 aa).

It belongs to the universal ribosomal protein uL22 family. As to quaternary structure, part of the 50S ribosomal subunit.

Functionally, this protein binds specifically to 23S rRNA; its binding is stimulated by other ribosomal proteins, e.g. L4, L17, and L20. It is important during the early stages of 50S assembly. It makes multiple contacts with different domains of the 23S rRNA in the assembled 50S subunit and ribosome. The globular domain of the protein is located near the polypeptide exit tunnel on the outside of the subunit, while an extended beta-hairpin is found that lines the wall of the exit tunnel in the center of the 70S ribosome. This chain is Large ribosomal subunit protein uL22, found in Prochlorococcus marinus subsp. pastoris (strain CCMP1986 / NIES-2087 / MED4).